A 353-amino-acid polypeptide reads, in one-letter code: Photosystem II protein D1 (353 aa).

Thr-2 carries the post-translational modification N-acetylthreonine. Thr-2 bears the Phosphothreonine mark. Helical transmembrane passes span 29–46, 118–133, and 142–156; these read YIGW…TATS, HFLL…EWEL, and WIAV…AATA. Chlorophyll a is bound at residue His-118. Tyr-126 is a pheophytin a binding site. The [CaMn4O5] cluster site is built by Asp-170 and Glu-189. Residues 197–218 traverse the membrane as a helical segment; the sequence is FHMLGVAGVFGGSLFSAMHGSL. A chlorophyll a-binding site is contributed by His-198. Residues His-215 and 264–265 contribute to the a quinone site; that span reads SF. His-215 contacts Fe cation. Position 272 (His-272) interacts with Fe cation. The helical transmembrane segment at 274–288 threads the bilayer; sequence FLAAWPVVGIWFTAL. 4 residues coordinate [CaMn4O5] cluster: His-332, Glu-333, Asp-342, and Ala-344. Residues 345 to 353 constitute a propeptide that is removed on maturation; that stretch reads ALEVPSING.

It belongs to the reaction center PufL/M/PsbA/D family. In terms of assembly, PSII is composed of 1 copy each of membrane proteins PsbA, PsbB, PsbC, PsbD, PsbE, PsbF, PsbH, PsbI, PsbJ, PsbK, PsbL, PsbM, PsbT, PsbX, PsbY, PsbZ, Psb30/Ycf12, at least 3 peripheral proteins of the oxygen-evolving complex and a large number of cofactors. It forms dimeric complexes. The D1/D2 heterodimer binds P680, chlorophylls that are the primary electron donor of PSII, and subsequent electron acceptors. It shares a non-heme iron and each subunit binds pheophytin, quinone, additional chlorophylls, carotenoids and lipids. D1 provides most of the ligands for the Mn4-Ca-O5 cluster of the oxygen-evolving complex (OEC). There is also a Cl(-1) ion associated with D1 and D2, which is required for oxygen evolution. The PSII complex binds additional chlorophylls, carotenoids and specific lipids. is required as a cofactor. Tyr-161 forms a radical intermediate that is referred to as redox-active TyrZ, YZ or Y-Z. Post-translationally, C-terminally processed by CTPA; processing is essential to allow assembly of the oxygen-evolving complex and thus photosynthetic growth.

The protein localises to the plastid. It localises to the chloroplast thylakoid membrane. It carries out the reaction 2 a plastoquinone + 4 hnu + 2 H2O = 2 a plastoquinol + O2. Functionally, photosystem II (PSII) is a light-driven water:plastoquinone oxidoreductase that uses light energy to abstract electrons from H(2)O, generating O(2) and a proton gradient subsequently used for ATP formation. It consists of a core antenna complex that captures photons, and an electron transfer chain that converts photonic excitation into a charge separation. The D1/D2 (PsbA/PsbD) reaction center heterodimer binds P680, the primary electron donor of PSII as well as several subsequent electron acceptors. The polypeptide is Photosystem II protein D1 (Agrostis stolonifera (Creeping bentgrass)).